A 160-amino-acid chain; its full sequence is MRIGLFAVGRLKSGPEKDLAARYFDRFAKAGPAVGLELARVAEVAESRASNAETRKREEAAMLLKSLADGSILILLDERGKALDSEAFASLLGSYRDQGKRDLTIAIGGADGLDPSLYDRADATLCLGKMTWPHQLVRILIAEQLYRAVTILSGHPYHRV.

Residues L76, G108, and 127–132 (LGKMTW) contribute to the S-adenosyl-L-methionine site.

The protein belongs to the RNA methyltransferase RlmH family. Homodimer.

Its subcellular location is the cytoplasm. It carries out the reaction pseudouridine(1915) in 23S rRNA + S-adenosyl-L-methionine = N(3)-methylpseudouridine(1915) in 23S rRNA + S-adenosyl-L-homocysteine + H(+). Functionally, specifically methylates the pseudouridine at position 1915 (m3Psi1915) in 23S rRNA. This chain is Ribosomal RNA large subunit methyltransferase H, found in Rhizobium leguminosarum bv. trifolii (strain WSM2304).